We begin with the raw amino-acid sequence, 837 residues long: ABC transporter A family member 8 (837 aa).

A run of 7 helical transmembrane segments spans residues 29 to 49 (YFST…FYII), 244 to 264 (VVSL…FIFL), 303 to 323 (LIIC…FFLG), 326 to 346 (FLVL…MAFF), 356 to 376 (VAIG…LTFN), 393 to 413 (GAAF…SKVL), and 455 to 475 (LAYM…IEYA). Residues 516–750 (IRGLSKTFNK…YGEGYSVQVI (235 aa)) form the ABC transporter domain. 553 to 560 (GSNGAGKS) is an ATP binding site.

This sequence belongs to the ABC transporter superfamily. ABCA family.

It is found in the membrane. This is ABC transporter A family member 8 (abcA8) from Dictyostelium discoideum (Social amoeba).